The sequence spans 274 residues: MIMKVHQVQEKKMNKTYYLISSLAPKSESLKPLIKKELNKKLVEVDDPTVADYLFINGGDGTFIKNAIKYDRAGLKIIGINGGSLGFYTTFNETNIDQIANNLDQLKYTQLDFIRLQIDDQIHHALNEFNINSTTAYGYDIFIDNEFYQKFRGTGLLISTTTGSTGINKSANGAILFPRIKAIQMVELYPLLHSSFTTIQSPIILPIDTKIRIEIKENYCDHDACPRIVADGAVIRQGLSSTTIEISATRSQADYVATTDLRSYIQRLQKTFIY.

The Proton acceptor role is filled by D60. NAD(+) is bound by residues 60 to 61, K65, 127 to 128, and R152; these read DG and NE.

This sequence belongs to the NAD kinase family. The cofactor is a divalent metal cation.

It localises to the cytoplasm. It catalyses the reaction NAD(+) + ATP = ADP + NADP(+) + H(+). Functionally, involved in the regulation of the intracellular balance of NAD and NADP, and is a key enzyme in the biosynthesis of NADP. Catalyzes specifically the phosphorylation on 2'-hydroxyl of the adenosine moiety of NAD to yield NADP. The chain is NAD kinase from Mycoplasmoides gallisepticum (strain R(low / passage 15 / clone 2)) (Mycoplasma gallisepticum).